Reading from the N-terminus, the 238-residue chain is 5'-deoxynucleotidase YBR242W (238 aa).

One can recognise an HD domain in the interval 77–183 (ISDHMYRLSI…VKDIDKYEML (107 aa)). Residues His-80, His-108, Asp-109, Glu-112, Asp-117, Ile-118, and Asp-178 each contribute to the a divalent metal cation site.

This sequence belongs to the HDDC2 family. As to quaternary structure, homodimer. The cofactor is Mn(2+). It depends on Co(2+) as a cofactor. Requires Mg(2+) as cofactor.

It catalyses the reaction a 2'-deoxyribonucleoside 5'-phosphate + H2O = a 2'-deoxyribonucleoside + phosphate. Functionally, catalyzes the dephosphorylation of the nucleoside 5'-monophosphates deoxyadenosine monophosphate (dAMP), deoxycytidine monophosphate (dCMP), deoxyguanosine monophosphate (dGMP) and deoxythymidine monophosphate (dTMP). This chain is 5'-deoxynucleotidase YBR242W, found in Saccharomyces cerevisiae (strain ATCC 204508 / S288c) (Baker's yeast).